The chain runs to 156 residues: ATP synthase subunit b (156 aa).

Residues leucine 7–proline 27 traverse the membrane as a helical segment.

It belongs to the ATPase B chain family. As to quaternary structure, F-type ATPases have 2 components, F(1) - the catalytic core - and F(0) - the membrane proton channel. F(1) has five subunits: alpha(3), beta(3), gamma(1), delta(1), epsilon(1). F(0) has three main subunits: a(1), b(2) and c(10-14). The alpha and beta chains form an alternating ring which encloses part of the gamma chain. F(1) is attached to F(0) by a central stalk formed by the gamma and epsilon chains, while a peripheral stalk is formed by the delta and b chains.

Its subcellular location is the cell inner membrane. Its function is as follows. F(1)F(0) ATP synthase produces ATP from ADP in the presence of a proton or sodium gradient. F-type ATPases consist of two structural domains, F(1) containing the extramembraneous catalytic core and F(0) containing the membrane proton channel, linked together by a central stalk and a peripheral stalk. During catalysis, ATP synthesis in the catalytic domain of F(1) is coupled via a rotary mechanism of the central stalk subunits to proton translocation. Component of the F(0) channel, it forms part of the peripheral stalk, linking F(1) to F(0). The protein is ATP synthase subunit b of Ralstonia pickettii (strain 12J).